The following is a 244-amino-acid chain: Electron transfer flavoprotein beta subunit lysine methyltransferase homolog (244 aa).

This sequence belongs to the methyltransferase superfamily. ETFBKMT family.

Functionally, probable methyltransferase. This chain is Electron transfer flavoprotein beta subunit lysine methyltransferase homolog, found in Caenorhabditis elegans.